A 231-amino-acid polypeptide reads, in one-letter code: Somatolactin (231 aa).

An N-terminal signal peptide occupies residues 1–24; sequence MLMFTAIQRGVWVALLWPHLLTAS. 3 disulfide bridges follow: cysteine 29–cysteine 39, cysteine 89–cysteine 205, and cysteine 222–cysteine 230. 2 N-linked (GlcNAc...) asparagine glycosylation sites follow: asparagine 35 and asparagine 145.

The protein belongs to the somatotropin/prolactin family. Pituitary gland.

The protein resides in the secreted. The protein is Somatolactin of Siganus guttatus (Orange-spotted spinefoot).